Here is a 469-residue protein sequence, read N- to C-terminus: Interstitial collagenase (469 aa).

Positions 1 to 19 are cleaved as a signal peptide; the sequence is MHSFPPLLLLLFWGVVSHS. A propeptide spans 20–99 (activation peptide); it reads FPATLETQEQ…PRCGVPDVAQ (80 aa). S57 carries the phosphoserine modification. The Cysteine switch motif lies at 90-97; that stretch reads PRCGVPDV. Residue C92 coordinates Zn(2+). The segment at 98-276 is metalloprotease; it reads AQFVLTEGNP…VQPIGPQTPK (179 aa). N-linked (GlcNAc...) asparagine glycosylation occurs at N120. Residues D124 and D158 each contribute to the Ca(2+) site. Zn(2+) is bound by residues H168 and D170. D175, G176, G178, and N180 together coordinate Ca(2+). H183 serves as a coordination point for Zn(2+). 3 residues coordinate Ca(2+): G190, G192, and D194. H196 serves as a coordination point for Zn(2+). Residues D198, E199, and E201 each contribute to the Ca(2+) site. A Zn(2+)-binding site is contributed by H218. Residue E219 is part of the active site. H222 and H228 together coordinate Zn(2+). A Phosphothreonine modification is found at T274. Hemopexin repeat units lie at residues 275 to 324, 325 to 371, 374 to 422, and 423 to 466; these read PKAC…WPQL, PNGL…FGFP, VKHI…FPGI, and GHKV…WFNC. A disulfide bridge connects residues C278 and C466. The Ca(2+) site is built by D285 and E329. Position 360 is a phosphotyrosine; by PKDCC (Y360). Ca(2+) is bound by residues D378 and D427.

Belongs to the peptidase M10A family. In terms of assembly, (Microbial infection) Interacts with HIV-1 Tat. Requires Ca(2+) as cofactor. Zn(2+) is required as a cofactor. Undergoes autolytic cleavage to two major forms (22 kDa and 27 kDa). A minor form (25 kDa) is the glycosylated form of the 22 kDa form. The 27 kDa form has no activity while the 22/25 kDa form can act as activator for collagenase. Post-translationally, tyrosine phosphorylated in platelets by PKDCC/VLK.

It is found in the secreted. Its subcellular location is the extracellular space. The protein resides in the extracellular matrix. It carries out the reaction Cleavage of the triple helix of collagen at about three-quarters of the length of the molecule from the N-terminus, at 775-Gly-|-Ile-776 in the alpha1(I) chain. Cleaves synthetic substrates and alpha-macroglobulins at bonds where P1' is a hydrophobic residue.. With respect to regulation, can be activated without removal of the activation peptide. In terms of biological role, cleaves collagens of types I, II, and III at one site in the helical domain. Also cleaves collagens of types VII and X. In case of HIV infection, interacts and cleaves the secreted viral Tat protein, leading to a decrease in neuronal Tat's mediated neurotoxicity. The chain is Interstitial collagenase (MMP1) from Homo sapiens (Human).